A 352-amino-acid polypeptide reads, in one-letter code: Holliday junction branch migration complex subunit RuvB (352 aa).

The disordered stretch occupies residues 1–26 (MIETDKLRAAAPERLISPQPADRQED). The segment at 4 to 193 (TDKLRAAAPE…FGIVSRLEFY (190 aa)) is large ATPase domain (RuvB-L). ATP contacts are provided by residues Leu-32, Arg-33, Gly-74, Lys-77, Thr-78, Thr-79, 140–142 (EDF), Arg-183, Tyr-193, and Arg-230. Thr-78 contacts Mg(2+). The segment at 194–264 (TPDELGFIVS…VADAALRMLD (71 aa)) is small ATPAse domain (RuvB-S). A head domain (RuvB-H) region spans residues 267 to 352 (SLGLDLMDRK…RPGGTDLFGG (86 aa)). DNA contacts are provided by Arg-322 and Arg-327.

The protein belongs to the RuvB family. As to quaternary structure, homohexamer. Forms an RuvA(8)-RuvB(12)-Holliday junction (HJ) complex. HJ DNA is sandwiched between 2 RuvA tetramers; dsDNA enters through RuvA and exits via RuvB. An RuvB hexamer assembles on each DNA strand where it exits the tetramer. Each RuvB hexamer is contacted by two RuvA subunits (via domain III) on 2 adjacent RuvB subunits; this complex drives branch migration. In the full resolvosome a probable DNA-RuvA(4)-RuvB(12)-RuvC(2) complex forms which resolves the HJ.

The protein localises to the cytoplasm. It catalyses the reaction ATP + H2O = ADP + phosphate + H(+). In terms of biological role, the RuvA-RuvB-RuvC complex processes Holliday junction (HJ) DNA during genetic recombination and DNA repair, while the RuvA-RuvB complex plays an important role in the rescue of blocked DNA replication forks via replication fork reversal (RFR). RuvA specifically binds to HJ cruciform DNA, conferring on it an open structure. The RuvB hexamer acts as an ATP-dependent pump, pulling dsDNA into and through the RuvAB complex. RuvB forms 2 homohexamers on either side of HJ DNA bound by 1 or 2 RuvA tetramers; 4 subunits per hexamer contact DNA at a time. Coordinated motions by a converter formed by DNA-disengaged RuvB subunits stimulates ATP hydrolysis and nucleotide exchange. Immobilization of the converter enables RuvB to convert the ATP-contained energy into a lever motion, pulling 2 nucleotides of DNA out of the RuvA tetramer per ATP hydrolyzed, thus driving DNA branch migration. The RuvB motors rotate together with the DNA substrate, which together with the progressing nucleotide cycle form the mechanistic basis for DNA recombination by continuous HJ branch migration. Branch migration allows RuvC to scan DNA until it finds its consensus sequence, where it cleaves and resolves cruciform DNA. This is Holliday junction branch migration complex subunit RuvB from Azoarcus sp. (strain BH72).